Here is a 190-residue protein sequence, read N- to C-terminus: Ribonuclease HII (190 aa).

Residues 3 to 190 enclose the RNase H type-2 domain; sequence KLIAGVDEVG…KPVKALLEEK (188 aa). A divalent metal cation contacts are provided by Asp9, Glu10, and Asp101.

The protein belongs to the RNase HII family. Requires Mn(2+) as cofactor. Mg(2+) is required as a cofactor.

Its subcellular location is the cytoplasm. The catalysed reaction is Endonucleolytic cleavage to 5'-phosphomonoester.. In terms of biological role, endonuclease that specifically degrades the RNA of RNA-DNA hybrids. In Alteromonas mediterranea (strain DSM 17117 / CIP 110805 / LMG 28347 / Deep ecotype), this protein is Ribonuclease HII.